We begin with the raw amino-acid sequence, 334 residues long: Ribosomal RNA small subunit methyltransferase H (334 aa).

S-adenosyl-L-methionine-binding positions include 53–55 (GGH), D72, F99, D122, and H129.

The protein belongs to the methyltransferase superfamily. RsmH family.

The protein localises to the cytoplasm. It catalyses the reaction cytidine(1402) in 16S rRNA + S-adenosyl-L-methionine = N(4)-methylcytidine(1402) in 16S rRNA + S-adenosyl-L-homocysteine + H(+). Specifically methylates the N4 position of cytidine in position 1402 (C1402) of 16S rRNA. The sequence is that of Ribosomal RNA small subunit methyltransferase H from Leptospira interrogans serogroup Icterohaemorrhagiae serovar copenhageni (strain Fiocruz L1-130).